A 509-amino-acid chain; its full sequence is Proto-oncogene tyrosine-protein kinase LCK (509 aa).

Gly2 carries the N-myristoyl glycine lipid modification. The segment at 2 to 72 (GCGCSSHLED…DNLVIALHSY (71 aa)) is interactions with CD4 and CD8. Residues Cys3 and Cys5 are each lipidated (S-palmitoyl cysteine). The SH3 domain maps to 61–121 (LQDNLVIALH…PFNFVAKANS (61 aa)). Residue Lys99 forms a Glycyl lysine isopeptide (Lys-Gly) (interchain with G-Cter in ubiquitin) linkage. The residue at position 102 (Ser102) is a Phosphoserine. The SH2 domain maps to 127–224 (WFFKNLSRKD…GLCTRLSRPC (98 aa)). The tract at residues 154 to 242 (RESESTAGSF…WWEDEWEVPR (89 aa)) is interaction with PTPRH. Thr159 is modified (phosphothreonine). The residue at position 162 (Ser162) is a Phosphoserine. Position 192 is a phosphotyrosine (Tyr192). Ser194 carries the phosphoserine modification. In terms of domain architecture, Protein kinase spans 245–498 (LKLVERLGAG…YLRSVLEDFF (254 aa)). ATP is bound by residues 251 to 259 (LGAGQFGEV) and Lys273. Lys276 is covalently cross-linked (Glycyl lysine isopeptide (Lys-Gly) (interchain with G-Cter in ubiquitin)). Asp364 functions as the Proton acceptor in the catalytic mechanism. At Tyr394 the chain carries Phosphotyrosine; by autocatalysis. A Phosphotyrosine; by CSK modification is found at Tyr505.

The protein belongs to the protein kinase superfamily. Tyr protein kinase family. Binds to the cytoplasmic domain of cell surface receptors, such as AXL, CD2, CD4, CD5, CD8, CD44, CD45 and CD122. Also binds to effector molecules, such as PI4K, VAV1, RASA1, FYB1 and to other protein kinases including CDK1, RAF1, ZAP70 and SYK. Binds to phosphatidylinositol 3'-kinase (PI3K) from T-lymphocytes through its SH3 domain and to the tyrosine phosphorylated form of KHDRBS1/p70 through its SH2 domain. Interacts with SQSTM1. Interacts with phosphorylated LIME1. Interacts with CBLB and PTPRH. Interacts with RUNX3. Forms a signaling complex with EPHA1, PTK2B and PI3-KINASE; upon activation by EFNA1 which may regulate T-lymphocytes migration. Associates with ZAP70 and RHOH; these interactions allow LCK-mediated RHOH and CD3 subunit phosphorylations in the presence of functional ZAP70. Interacts with Saimiriine herpesvirus 2 TIP. Interacts with UNC119; this interaction plays a crucial role in activation of LCK. Interacts with CEACAM1 (via cytoplasmic domain); mediates CEACAM1 phosphorylation resulting in PTPN6 recruitment that dephosphorylates TCR stimulation-induced CD247 and ZAP70. Interacts with CD160. Interacts with CD48. In terms of processing, autophosphorylated on Tyr-394, increasing enzymatic activity, this site is dephosphorylated by PTN22. Phosphorylated on Tyr-505 by CSK, decreasing activity. Dephosphorylated by PTPRC/CD45. Dephosphorylation at Tyr-394 by PTPN2 negatively regulates T-cells differentiation. Dephosphorylation at Tyr-394 by DUSP22 negatively regulates T-cell receptor signaling. Myristoylation is required prior to palmitoylation. Post-translationally, palmitoylation regulates association with the plasma membrane and could be mediated by ZDHHC2. In terms of processing, 'Lys-63'-linked ubiquitinated at Lys-99 and Lys-276 by UBR2; this modification is required for autophosphorylation at Tyr-394. In terms of tissue distribution, expressed specifically in lymphoid cells.

It is found in the cell membrane. Its subcellular location is the cytoplasm. The protein localises to the cytosol. It catalyses the reaction L-tyrosyl-[protein] + ATP = O-phospho-L-tyrosyl-[protein] + ADP + H(+). Its activity is regulated as follows. The relative activities of the inhibitory tyrosine-protein kinase CSK and the activating tyrosine-protein phosphatase PTPRC/CD45 determine the level of LCK activity. These interactions allow rapid and efficient activation of LCK in response to TCR stimulation. Functionally, non-receptor tyrosine-protein kinase that plays an essential role in the selection and maturation of developing T-cells in the thymus and in the function of mature T-cells. Plays a key role in T-cell antigen receptor (TCR)-linked signal transduction pathways. Constitutively associated with the cytoplasmic portions of the CD4 and CD8 surface receptors. Association of the TCR with a peptide antigen-bound MHC complex facilitates the interaction of CD4 and CD8 with MHC class II and class I molecules, respectively, thereby recruiting the associated LCK protein to the vicinity of the TCR/CD3 complex. LCK then phosphorylates tyrosine residues within the immunoreceptor tyrosine-based activation motifs (ITAM) of the cytoplasmic tails of the TCR-gamma chains and CD3 subunits, initiating the TCR/CD3 signaling pathway. Once stimulated, the TCR recruits the tyrosine kinase ZAP70, that becomes phosphorylated and activated by LCK. Following this, a large number of signaling molecules are recruited, ultimately leading to lymphokine production. LCK also contributes to signaling by other receptor molecules. Associates directly with the cytoplasmic tail of CD2, which leads to hyperphosphorylation and activation of LCK. Also plays a role in the IL2 receptor-linked signaling pathway that controls the T-cell proliferative response. Binding of IL2 to its receptor results in increased activity of LCK. Is expressed at all stages of thymocyte development and is required for the regulation of maturation events that are governed by both pre-TCR and mature alpha beta TCR. Phosphorylates other substrates including RUNX3, PTK2B/PYK2, the microtubule-associated protein MAPT, RHOH or TYROBP. This is Proto-oncogene tyrosine-protein kinase LCK (LCK) from Saimiri sciureus (Common squirrel monkey).